Here is a 62-residue protein sequence, read N- to C-terminus: Venom peptide SjAPI-2 (62 aa).

5 disulfides stabilise this stretch: Cys4–Cys40, Cys14–Cys36, Cys18–Cys32, Cys22–Cys60, and Cys42–Cys54. In terms of domain architecture, TIL spans 4-60 (CRISGEVFTWCGTTCPLTCENFRNPPKHCPQGCFVGCMCRRGLVRHRNGRCVRPPRC).

It belongs to the serine protease inhibitor-like (TIL domain-containing) family. In terms of tissue distribution, expressed by the venom gland.

It localises to the secreted. Serine protease inhibitor. This is Venom peptide SjAPI-2 from Scorpiops jendeki (Scorpion).